Consider the following 211-residue polypeptide: Metalloproteinase inhibitor 3 (211 aa).

Residues 1–23 (MTPWLGLIVLLGSWSLGDWGAEA) form the signal peptide. Residue Cys-24 coordinates Zn(2+). 2 involved in metalloproteinase-binding regions span residues 24-27 (CTCS) and 88-89 (ES). 6 cysteine pairs are disulfide-bonded: Cys-24/Cys-91, Cys-26/Cys-118, Cys-36/Cys-143, Cys-145/Cys-192, Cys-150/Cys-155, and Cys-163/Cys-184. Residues 24–143 (CTCSPSHPQD…GLNYRYHLGC (120 aa)) form the NTR domain. Positions 105 to 188 (TGRVYDGKMY…SKHYACIRQK (84 aa)) are mediates interaction with EFEMP1. Residue Asn-207 is glycosylated (N-linked (GlcNAc...) asparagine).

It belongs to the protease inhibitor I35 (TIMP) family. In terms of assembly, interacts with EFEMP1. Interacts with KDR.

It localises to the secreted. The protein resides in the extracellular space. Its subcellular location is the extracellular matrix. Mediates a variety of processes including matrix regulation and turnover, inflammation, and angiogenesis, through reversible inhibition of zinc protease superfamily enzymes, primarily matrix metalloproteinases (MMPs). Regulates extracellular matrix (ECM) remodeling through inhibition of matrix metalloproteinases (MMP) including MMP-1, MMP-2, MMP-3, MMP-7, MMP-9, MMP-13, MMP-14 and MMP-15. Additionally, modulates the processing of amyloid precursor protein (APP) and apolipoprotein E receptor ApoER2 by inhibiting two alpha-secretases ADAM10 and ADAM17. Functions as a tumor suppressor and a potent inhibitor of angiogenesis. Exerts its anti-angiogenic effect by directly interacting with vascular endothelial growth factor (VEGF) receptor-2/KDR, preventing its binding to the VEGFA ligand. Selectively induces apoptosis in angiogenic endothelial cells through a caspase-independent cell death pathway. Mechanistically, inhibits matrix-induced focal adhesion kinase PTK2 tyrosine phosphorylation and association with paxillin/PXN and disrupts the incorporation of ITGB3, PTK2 and PXN into focal adhesion contacts on the matrix. The protein is Metalloproteinase inhibitor 3 (TIMP3) of Macaca mulatta (Rhesus macaque).